A 798-amino-acid chain; its full sequence is Bromodomain-containing protein 2 (798 aa).

An N-acetylmethionine modification is found at methionine 1. A disordered region spans residues methionine 1–leucine 21. Threonine 6 carries the phosphothreonine modification. Residue serine 36 is modified to Phosphoserine. Residues leucine 53 to glycine 72 form a disordered region. Residues arginine 73–methionine 179 enclose the Bromo 1 domain. A protein is bound by residues aspartate 111, tyrosine 154, asparagine 155, lysine 156, aspartate 159, and aspartate 160. Disordered stretches follow at residues proline 267–glutamine 348, glutamate 455–leucine 648, and glutamate 735–glycine 798. The segment covering threonine 284–serine 297 has biased composition (low complexity). A phosphoserine mark is found at serine 297, serine 300, and serine 304. Basic and acidic residues predominate over residues methionine 315–proline 331. One can recognise a Bromo 2 domain in the interval glycine 343–methionine 452. Residues serine 480 to glutamate 512 show a composition bias toward acidic residues. Residues lysine 542 to arginine 564 show a composition bias toward basic residues. The Nuclear localization signal motif lies at lysine 553 to lysine 557. The NET domain maps to aspartate 630–proline 712. Serine 631 carries the post-translational modification Phosphoserine. Over residues serine 637 to leucine 648 the composition is skewed to basic and acidic residues. A compositionally biased stretch (low complexity) spans serine 772–threonine 792.

The protein belongs to the BET family. Homodimer. Interacts with E2F1. Interacts with (acetylated) STAT3; promoting STAT3 recruitment to chromatin. Interacts with CTCF; promoting BRD2 recruitment to chromatin.

It is found in the nucleus. The protein resides in the chromosome. Its function is as follows. Chromatin reader protein that specifically recognizes and binds histone H4 acetylated at 'Lys-5' and 'Lys-12' (H4K5ac and H4K12ac, respectively), thereby controlling gene expression and remodeling chromatin structures. Recruits transcription factors and coactivators to target gene sites, and activates RNA polymerase II machinery for transcriptional elongation. Plays a key role in genome compartmentalization via its association with CTCF and cohesin: recruited to chromatin by CTCF and promotes formation of topologically associating domains (TADs) via its ability to bind acetylated histones, contributing to CTCF boundary formation and enhancer insulation. Also recognizes and binds acetylated non-histone proteins, such as STAT3. Involved in inflammatory response by regulating differentiation of naive CD4(+) T-cells into T-helper Th17: recognizes and binds STAT3 acetylated at 'Lys-87', promoting STAT3 recruitment to chromatin. In addition to acetylated lysines, also recognizes and binds lysine residues on histones that are both methylated and acetylated on the same side chain to form N6-acetyl-N6-methyllysine (Kacme), an epigenetic mark of active chromatin associated with increased transcriptional initiation. Specifically binds histone H4 acetyl-methylated at 'Lys-5' and 'Lys-12' (H4K5acme and H4K12acme, respectively). This chain is Bromodomain-containing protein 2 (Brd2), found in Rattus norvegicus (Rat).